Reading from the N-terminus, the 251-residue chain is tRNA (guanine-N(7)-)-methyltransferase (251 aa).

Glutamate 80, glutamate 105, aspartate 132, and aspartate 155 together coordinate S-adenosyl-L-methionine. The active site involves aspartate 155. Residues lysine 159, aspartate 191, and 228-231 each bind substrate; that span reads TKFE.

It belongs to the class I-like SAM-binding methyltransferase superfamily. TrmB family.

The catalysed reaction is guanosine(46) in tRNA + S-adenosyl-L-methionine = N(7)-methylguanosine(46) in tRNA + S-adenosyl-L-homocysteine. The protein operates within tRNA modification; N(7)-methylguanine-tRNA biosynthesis. In terms of biological role, catalyzes the formation of N(7)-methylguanine at position 46 (m7G46) in tRNA. This chain is tRNA (guanine-N(7)-)-methyltransferase, found in Histophilus somni (strain 129Pt) (Haemophilus somnus).